Reading from the N-terminus, the 85-residue chain is Cytochrome c2 (85 aa).

Heme c contacts are provided by Cys12, Cys15, His16, and Met61.

The protein belongs to the cytochrome c family. Post-translationally, binds 1 heme c group covalently per subunit.

Its function is as follows. Cytochrome c2 is found mainly in purple, non-sulfur, photosynthetic bacteria where it functions as the electron donor to the oxidized bacteriochlorophyll in the photophosphorylation pathway. However, it may also have a role in the respiratory chain and is found in some non-photosynthetic bacteria. This Rubrivivax gelatinosus (Rhodocyclus gelatinosus) protein is Cytochrome c2.